The primary structure comprises 364 residues: DNA polymerase IV (364 aa).

The 185-residue stretch at 14-198 (IIHIDMDAFF…LPIEKFHGVG (185 aa)) folds into the UmuC domain. Residues aspartate 18 and aspartate 116 each contribute to the Mg(2+) site. The active site involves glutamate 117.

It belongs to the DNA polymerase type-Y family. Monomer. Requires Mg(2+) as cofactor.

It is found in the cytoplasm. The enzyme catalyses DNA(n) + a 2'-deoxyribonucleoside 5'-triphosphate = DNA(n+1) + diphosphate. Its function is as follows. Poorly processive, error-prone DNA polymerase involved in untargeted mutagenesis. Copies undamaged DNA at stalled replication forks, which arise in vivo from mismatched or misaligned primer ends. These misaligned primers can be extended by PolIV. Exhibits no 3'-5' exonuclease (proofreading) activity. May be involved in translesional synthesis, in conjunction with the beta clamp from PolIII. The polypeptide is DNA polymerase IV (Streptococcus pyogenes serotype M12 (strain MGAS2096)).